Here is a 339-residue protein sequence, read N- to C-terminus: Fructose-1,6-bisphosphatase class 1 (339 aa).

4 residues coordinate Mg(2+): Glu92, Asp114, Leu116, and Asp117. Residues 117–120, Asn209, and Lys275 each bind substrate; that span reads DGSS. Glu281 provides a ligand contact to Mg(2+).

This sequence belongs to the FBPase class 1 family. Homotetramer. The cofactor is Mg(2+).

It localises to the cytoplasm. The enzyme catalyses beta-D-fructose 1,6-bisphosphate + H2O = beta-D-fructose 6-phosphate + phosphate. The protein operates within carbohydrate biosynthesis; gluconeogenesis. This is Fructose-1,6-bisphosphatase class 1 from Acidithiobacillus ferrooxidans (strain ATCC 53993 / BNL-5-31) (Leptospirillum ferrooxidans (ATCC 53993)).